The primary structure comprises 275 residues: Large ribosomal subunit protein uL2 (275 aa).

The interval 220–275 (VRGAAMNPRDHPHGGGEGRAPRGMPTPKTKWGKPARGVKTRHNPRTDPFIIRRRTR) is disordered. Positions 227-239 (PRDHPHGGGEGRA) are enriched in basic and acidic residues. The span at 249 to 262 (KWGKPARGVKTRHN) shows a compositional bias: basic residues.

Belongs to the universal ribosomal protein uL2 family. As to quaternary structure, part of the 50S ribosomal subunit. Forms a bridge to the 30S subunit in the 70S ribosome.

In terms of biological role, one of the primary rRNA binding proteins. Required for association of the 30S and 50S subunits to form the 70S ribosome, for tRNA binding and peptide bond formation. It has been suggested to have peptidyltransferase activity; this is somewhat controversial. Makes several contacts with the 16S rRNA in the 70S ribosome. The chain is Large ribosomal subunit protein uL2 from Roseiflexus sp. (strain RS-1).